The following is a 266-amino-acid chain: Probable septum site-determining protein MinC (266 aa).

Positions 98-146 (ILKGGRPVSDVDVPKVEPESPPAEEKKKTGKATKASGKSDEIGETDSPQ) are disordered. Positions 109–124 (DVPKVEPESPPAEEKK) are enriched in basic and acidic residues.

It belongs to the MinC family. Interacts with MinD and FtsZ.

Cell division inhibitor that blocks the formation of polar Z ring septums. Rapidly oscillates between the poles of the cell to destabilize FtsZ filaments that have formed before they mature into polar Z rings. Prevents FtsZ polymerization. This Allorhizobium ampelinum (strain ATCC BAA-846 / DSM 112012 / S4) (Agrobacterium vitis (strain S4)) protein is Probable septum site-determining protein MinC.